The chain runs to 328 residues: Probable ABC transporter permease YtrC (328 aa).

8 consecutive transmembrane segments (helical) span residues 16–36 (VVIL…IVNT), 60–80 (ISNL…CFLG), 110–130 (GFVI…LILV), 144–164 (IGVI…GALT), 167–187 (AFAQ…IIAL), 236–256 (YLLL…FISF), 277–297 (VQIL…YYTG), and 300–320 (IIGY…VSYF).

It belongs to the ABC-5 integral membrane protein family. The complex is composed of 2 ATP-binding proteins (YtrB and YtrE), 2 transmembrane proteins (YtrC and YtrD) and a solute-binding protein (YtrF).

It localises to the cell membrane. In terms of biological role, part of the ABC transporter complex YtrBCDEF that plays a role in acetoin utilization during stationary phase and sporulation. This chain is Probable ABC transporter permease YtrC (ytrC), found in Bacillus subtilis (strain 168).